We begin with the raw amino-acid sequence, 189 residues long: Probable pericyclase scpY (189 aa).

The protein belongs to the pericyclase pydY family.

Its pathway is mycotoxin biosynthesis. Probable pericyclase; part of the gene scp cluster that mediates the biosynthesis of a hirsutellone-like compound that has still to be identified. This chain is Probable pericyclase scpY, found in Mollisia scopiformis (Conifer needle endophyte fungus).